The sequence spans 450 residues: 23S rRNA (uracil(1939)-C(5))-methyltransferase RlmD (450 aa).

Positions 12-70 constitute a TRAM domain; sequence SKQLSAKLSLNVDQLDHLGAGIAQYQGKVVFIPGALPDETVTVQLTEQKKNYARAKLIK. Positions 83, 89, 92, and 171 each coordinate [4Fe-4S] cluster. 6 residues coordinate S-adenosyl-L-methionine: Gln-283, Phe-312, Asn-317, Glu-333, Asp-360, and Asp-380. Cys-406 (nucleophile) is an active-site residue.

The protein belongs to the class I-like SAM-binding methyltransferase superfamily. RNA M5U methyltransferase family. RlmD subfamily.

The enzyme catalyses uridine(1939) in 23S rRNA + S-adenosyl-L-methionine = 5-methyluridine(1939) in 23S rRNA + S-adenosyl-L-homocysteine + H(+). Catalyzes the formation of 5-methyl-uridine at position 1939 (m5U1939) in 23S rRNA. This is 23S rRNA (uracil(1939)-C(5))-methyltransferase RlmD from Shewanella sp. (strain W3-18-1).